The following is a 174-amino-acid chain: CD164 sialomucin-like 2 protein (174 aa).

The first 29 residues, 1–29 (MEAPGPRALRTALCGGCCCLLLCAQLAVA), serve as a signal peptide directing secretion. The Extracellular segment spans residues 30 to 141 (GKGARGFGRG…AHSPGFDGAS (112 aa)). 2 N-linked (GlcNAc...) asparagine glycosylation sites follow: asparagine 71 and asparagine 103. The helical transmembrane segment at 142 to 162 (FIGGVVLVLSLQAVAFFVLHF) threads the bilayer. Residues 163 to 174 (LKAKDSTYQTLI) are Cytoplasmic-facing.

It belongs to the CD164 family.

It is found in the membrane. In Homo sapiens (Human), this protein is CD164 sialomucin-like 2 protein (CD164L2).